A 309-amino-acid polypeptide reads, in one-letter code: General transcription factor IIH subunit 3 (309 aa).

The C4-type zinc-finger motif lies at 269–286 (CSVCLSIFCNFSPICTTC).

This sequence belongs to the TFB4 family. In terms of assembly, part of a TFIID-containing RNA polymerase II pre-initiation complex that is composed of TBP and at least GTF2A1, GTF2A2, GTF2E1, GTF2E2, GTF2F1, GTF2H2, GTF2H3, GTF2H4, GTF2H5, GTF2B, TCEA1, ERCC2, ERCC3, TAF1, TAF2, TAF3, TAF4, TAF5, TAF6, TAF7, TAF8, TAF9, TAF10, TAF11, TAF12 and TAF13. Component of the 7-subunit TFIIH core complex composed of XPB/ERCC3, XPD/ERCC2, GTF2H1, GTF2H2, GTF2H3, GTF2H4 and GTF2H5, which is active in NER. The core complex associates with the 3-subunit CDK-activating kinase (CAK) module composed of CCNH/cyclin H, CDK7 and MNAT1 to form the 10-subunit holoenzyme (holo-TFIIH) active in transcription. Interacts with RARA; the interaction requires prior phosphorylation of RARA on 'Ser-369' which then enhances interaction of RARA with CDK7.

Its subcellular location is the nucleus. Component of the general transcription and DNA repair factor IIH (TFIIH) core complex, which is involved in general and transcription-coupled nucleotide excision repair (NER) of damaged DNA and, when complexed to CAK, in RNA transcription by RNA polymerase II. In NER, TFIIH acts by opening DNA around the lesion to allow the excision of the damaged oligonucleotide and its replacement by a new DNA fragment. In transcription, TFIIH has an essential role in transcription initiation. When the pre-initiation complex (PIC) has been established, TFIIH is required for promoter opening and promoter escape. Phosphorylation of the C-terminal tail (CTD) of the largest subunit of RNA polymerase II by the kinase module CAK controls the initiation of transcription. This is General transcription factor IIH subunit 3 (GTF2H3) from Bos taurus (Bovine).